We begin with the raw amino-acid sequence, 271 residues long: Digeranylgeranylglyceryl phosphate synthase (271 aa).

8 consecutive transmembrane segments (helical) span residues isoleucine 11–leucine 31, valine 33–asparagine 53, phenylalanine 88–leucine 108, leucine 125–valine 145, proline 149–leucine 169, valine 201–tryptophan 221, leucine 224–glycine 244, and alanine 251–leucine 271.

The protein belongs to the UbiA prenyltransferase family. DGGGP synthase subfamily. Mg(2+) is required as a cofactor.

It localises to the cell membrane. It carries out the reaction sn-3-O-(geranylgeranyl)glycerol 1-phosphate + (2E,6E,10E)-geranylgeranyl diphosphate = 2,3-bis-O-(geranylgeranyl)-sn-glycerol 1-phosphate + diphosphate. Its pathway is membrane lipid metabolism; glycerophospholipid metabolism. Prenyltransferase that catalyzes the transfer of the geranylgeranyl moiety of geranylgeranyl diphosphate (GGPP) to the C2 hydroxyl of (S)-3-O-geranylgeranylglyceryl phosphate (GGGP). This reaction is the second ether-bond-formation step in the biosynthesis of archaeal membrane lipids. This Methanopyrus kandleri (strain AV19 / DSM 6324 / JCM 9639 / NBRC 100938) protein is Digeranylgeranylglyceryl phosphate synthase.